A 514-amino-acid chain; its full sequence is Nitric oxide reductase transcription regulator NorR1 (514 aa).

4-aspartylphosphate is present on Asp-54. A Sigma-54 factor interaction domain is found at 187–416 (IIGQSQAIAG…LEHVISRAAL (230 aa)). ATP is bound by residues 215–222 (GETGVGKE) and 287–296 (EVGELPLSIQ). A DNA-binding region (H-T-H motif) is located at residues 490–509 (WAKAARQLGMDASNLHKLAK).

The protein operates within nitrogen metabolism; nitrate reduction (denitrification) [regulation]. Functionally, required for the nitric oxide (NO) induced expression of NO reductase. Not required for expression of 2 other pathway members, nitrate reductase (nirS) and nitrous oxide reductase (nosZ). This is Nitric oxide reductase transcription regulator NorR1 (norR1) from Cupriavidus necator (strain ATCC 17699 / DSM 428 / KCTC 22496 / NCIMB 10442 / H16 / Stanier 337) (Ralstonia eutropha).